The primary structure comprises 352 residues: Transcription factor MYB51 (352 aa).

2 HTH myb-type domains span residues 10–62 and 63–117; these read ELGL…ANYL and RPDI…KKRL. DNA-binding regions (H-T-H motif) lie at residues 38–62 and 90–113; these read WRTLPEKAGLKRCGKSCRLRWANYL and WSAIARGLPGRTDNEIKNYWNTHI. 2 disordered regions span residues 128–157 and 198–219; these read KGITSGTDKSENLPEKQNVNLTTSDHDLDN and GGPLASTSHTTNTTTTSVSVDS. Over residues 203–219 the composition is skewed to low complexity; it reads STSHTTNTTTTSVSVDS.

As to quaternary structure, can form complexes with MYC2, MYC3 or MYC4. Expressed in vegetative parts of the plant, mainly in mature rosette leaves and in trichomes. Detected in roots, but not in mature flowers or siliques.

It is found in the nucleus. Transcription factor positively regulating indolic glucosinolate biosynthetic pathway genes. In Arabidopsis thaliana (Mouse-ear cress), this protein is Transcription factor MYB51 (MYB51).